Consider the following 449-residue polypeptide: Elongation factor 1-alpha (449 aa).

One can recognise a tr-type G domain in the interval 5–234; that stretch reads KQHVSIVVIG…DNCDPPKRPV (230 aa). The segment at 14-21 is G1; it reads GHVDSGKS. A GTP-binding site is contributed by 14 to 21; that stretch reads GHVDSGKS. N6,N6-dimethyllysine is present on Lys55. Residues 70–74 form a G2 region; the sequence is GITID. The residue at position 79 (Lys79) is an N6,N6,N6-trimethyllysine. Positions 91-94 are G3; it reads DAPG. GTP-binding positions include 91 to 95 and 153 to 156; these read DAPGH and NKMD. The interval 153 to 156 is G4; that stretch reads NKMD. Lys187 bears the N6,N6,N6-trimethyllysine mark. Residues 194–196 are G5; that stretch reads SGW. Lys265 carries the N6-methyllysine modification. An N6,N6,N6-trimethyllysine mark is found at Lys310 and Lys400.

The protein belongs to the TRAFAC class translation factor GTPase superfamily. Classic translation factor GTPase family. EF-Tu/EF-1A subfamily.

It localises to the cytoplasm. Its function is as follows. This protein promotes the GTP-dependent binding of aminoacyl-tRNA to the A-site of ribosomes during protein biosynthesis. The chain is Elongation factor 1-alpha from Pyropia yezoensis (Susabi-nori).